The chain runs to 545 residues: Phenylalanine--tRNA ligase beta subunit (545 aa).

Residues 268 to 343 (FLHKIQNVRE…MSIGYNNLEP (76 aa)) enclose the B5 domain. The Mg(2+) site is built by Asp-321, Asp-327, Glu-330, and Asp-331.

Belongs to the phenylalanyl-tRNA synthetase beta subunit family. Type 2 subfamily. As to quaternary structure, tetramer of two alpha and two beta subunits. The cofactor is Mg(2+).

The protein localises to the cytoplasm. The catalysed reaction is tRNA(Phe) + L-phenylalanine + ATP = L-phenylalanyl-tRNA(Phe) + AMP + diphosphate + H(+). This chain is Phenylalanine--tRNA ligase beta subunit, found in Saccharolobus islandicus (strain M.16.27) (Sulfolobus islandicus).